A 455-amino-acid chain; its full sequence is MAQHFSLAACDVVGFDLDHTLCRYNLPESAPLIYNSFAQFLVKEKGYDKELLNVTPEDWDFCCKGLALDLEDGNFLKLANNGTVLRASHGTKMMTPEVLAEAYGKKEWKHFLSDTGMACRSGKYYFYDNYFDLPGALLCARVVDYLTKLNNGQKTFDFWKDIVAAIQHNYKMSAFKENCGIYFPEIKRDPGRYLHSCPESVKKWLRQLKNAGKILLLITSSHSDYCRLLCEYILGNDFTDLFDIVITNALKPGFFSHLPSQRPFRTLENDEEQEALPSLDKPGWYSQGNAVHLYELLKKMTGKPEPKVVYFGDSMHSDIFPARHYSNWETVLILEELRGDEGTRSQRPEESEPLEKKGKYEGPKAKPLNTSSKKWGSFFIDSVLGLENTEDSLVYTWSCKRISTYSTIAIPSIEAIAELPLDYKFTRFSSSNSKTAGYYPNPPLVLSSDETLISK.

The active-site Nucleophile is the aspartate 16. Residues aspartate 16 and aspartate 18 each coordinate Mg(2+). Aspartate 18 acts as the Proton donor in catalysis. Position 171 is an N6-acetyllysine (lysine 171). Aspartate 313 lines the Mg(2+) pocket. Residues 339-364 (GDEGTRSQRPEESEPLEKKGKYEGPK) are compositionally biased toward basic and acidic residues. The tract at residues 339-368 (GDEGTRSQRPEESEPLEKKGKYEGPKAKPL) is disordered.

This sequence belongs to the 5'(3')-deoxyribonucleotidase family.

This Homo sapiens (Human) protein is 5'-nucleotidase domain-containing protein 1 (NT5DC1).